The chain runs to 557 residues: Ribonuclease J 2 (557 aa).

Zn(2+) is bound by residues His76, His78, His144, and Glu166. Substrate is bound at residue 366–370 (HASSH).

It belongs to the metallo-beta-lactamase superfamily. RNA-metabolizing metallo-beta-lactamase-like family. Bacterial RNase J subfamily. In terms of assembly, homodimer, may be a subunit of the RNA degradosome. Requires Zn(2+) as cofactor.

It localises to the cytoplasm. An RNase that has 5'-3' exonuclease and possibly endoonuclease activity. Involved in maturation of rRNA and in some organisms also mRNA maturation and/or decay. In Staphylococcus saprophyticus subsp. saprophyticus (strain ATCC 15305 / DSM 20229 / NCIMB 8711 / NCTC 7292 / S-41), this protein is Ribonuclease J 2.